Consider the following 557-residue polypeptide: Organic cation/carnitine transporter 2 (557 aa).

Residues 1-20 lie on the Cytoplasmic side of the membrane; the sequence is MRDYDEVTAFLGEWGPFQRL. Residues 21–41 traverse the membrane as a helical segment; it reads IFFLLSASIIPNGFNGMSIVF. At 42 to 142 the chain is on the extracellular side; it reads LAGTPEHRCL…DLVCKDDWKA (101 aa). N-linked (GlcNAc...) asparagine glycosylation is found at Asn-57, Asn-64, and Asn-91. Residues 143–163 traverse the membrane as a helical segment; that stretch reads PLTTSLFFVGVLMGSFISGQL. The Cytoplasmic portion of the chain corresponds to 164–172; sequence SDRFGRKNV. The helical transmembrane segment at 173–193 threads the bilayer; sequence LFLTMGMQTGFSFLQLFSVNF. Residues 194–197 are Extracellular-facing; sequence EMFT. The chain crosses the membrane as a helical span at residues 198-218; the sequence is VLFVLVGMGQISNYVAAFVLG. 218–225 is an ATP binding site; sequence GTEILSKS. Over 219-232 the chain is Cytoplasmic; that stretch reads TEILSKSIRIIFAT. Residues 233–253 form a helical membrane-spanning segment; it reads LGVCIFYAFGFMVLPLFAYFI. Topologically, residues 254–257 are extracellular; sequence RDWR. Residues 258-278 traverse the membrane as a helical segment; the sequence is MLLLALTVPGVLCGALWWFIP. The Cytoplasmic segment spans residues 279–341; that stretch reads ESPRWLISQG…YDLVRTRNIR (63 aa). A helical membrane pass occupies residues 342 to 362; it reads IITIMSIILWLTISVGYFGLS. The Extracellular segment spans residues 363–373; it reads LDTPNLHGDIY. Residues 374 to 394 form a helical membrane-spanning segment; the sequence is VNCFLLAAVEVPAYVLAWLLL. The Cytoplasmic portion of the chain corresponds to 395 to 406; the sequence is QHLPRRYSISAA. Residues 407–427 traverse the membrane as a helical segment; sequence LFLGGSVLLFIQLVPSELFYL. At 428-430 the chain is on the extracellular side; it reads STA. The chain crosses the membrane as a helical span at residues 431–451; it reads LVMVGKFGITSAYSMVYVYTA. Residues 452-462 are Cytoplasmic-facing; that stretch reads ELYPTVVRNMG. A helical transmembrane segment spans residues 463–483; that stretch reads VGVSSTASRLGSILSPYFVYL. The Extracellular segment spans residues 484 to 488; sequence GAYDR. Tyr-486 bears the Phosphotyrosine mark. A helical membrane pass occupies residues 489–509; that stretch reads FLPYILMGSLTILTAILTLFF. Residues 510–557 are Cytoplasmic-facing; sequence PESFGAPLPDTIDQMLRVKGIKQWQIQSQTRTQKDGGESPTVLKSTAF. Residues 537–557 form a disordered region; it reads SQTRTQKDGGESPTVLKSTAF. Phosphoserine is present on Ser-548. A Phosphothreonine modification is found at Thr-550.

The protein belongs to the major facilitator (TC 2.A.1) superfamily. Organic cation transporter (TC 2.A.1.19) family. In terms of assembly, interacts with PDZK1. As to expression, expressed in the proximal and distal tubules and in the glomeruli in the kidney, in the myocardium, valves, and arterioles in the heart, in the labyrinthine layer of the placenta, and in the cortex, hippocampus, and cerebellum in the brain. Expressed in Sertoli cells in testis.

The protein resides in the cell membrane. Its subcellular location is the apical cell membrane. The protein localises to the basal cell membrane. The catalysed reaction is (R)-carnitine(out) + Na(+)(out) = (R)-carnitine(in) + Na(+)(in). It catalyses the reaction O-acetyl-(R)-carnitine(out) + Na(+)(out) = O-acetyl-(R)-carnitine(in) + Na(+)(in). It carries out the reaction O-propanoyl-(R)-carnitine(out) + Na(+)(out) = O-propanoyl-(R)-carnitine(in) + Na(+)(in). The enzyme catalyses glycine betaine(out) + Na(+)(out) = glycine betaine(in) + Na(+)(in). The catalysed reaction is glycine betaine(out) + (R)-carnitine(in) = glycine betaine(in) + (R)-carnitine(out). It catalyses the reaction O-butanoyl-(R)-carnitine(out) + Na(+)(out) = O-butanoyl-(R)-carnitine(in) + Na(+)(in). It carries out the reaction (S)-carnitine(out) + Na(+)(out) = (S)-carnitine(in) + Na(+)(in). The enzyme catalyses an O-acyl-(R)-carnitine(out) + Na(+)(out) = an O-acyl-(R)-carnitine(in) + Na(+)(in). The catalysed reaction is L-glutamyl-L-arginyl-glycyl-L-methionyl-L-threonine(out) + Na(+)(out) = L-glutamyl-L-arginyl-glycyl-L-methionyl-L-threonine(in) + Na(+)(in). It catalyses the reaction N,N-dimethylglycine(out) + Na(+)(out) = N,N-dimethylglycine(in) + Na(+)(in). Its activity is regulated as follows. Inhibited by emetine, quinidine and verapamil. The IC(50) of emetine is 4.2 uM. Not inhibited by valproic acid. Transport of (R)-carnitine is stimulated by cholesterol in the plasma membrane. Sodium-ion dependent, high affinity carnitine transporter. Involved in the active cellular uptake of carnitine. Transports one sodium ion with one molecule of carnitine. Also transports organic cations such as tetraethylammonium (TEA) without the involvement of sodium. Also relative uptake activity ratio of carnitine to TEA is 11.3. May also contribute to regulate the transport of organic compounds in testis across the blood-testis-barrier. This Rattus norvegicus (Rat) protein is Organic cation/carnitine transporter 2 (Slc22a5).